Here is a 60-residue protein sequence, read N- to C-terminus: DNA gyrase inhibitor YacG (60 aa).

C15, C18, C30, and C34 together coordinate Zn(2+).

It belongs to the DNA gyrase inhibitor YacG family. Interacts with GyrB. Zn(2+) is required as a cofactor.

Functionally, inhibits all the catalytic activities of DNA gyrase by preventing its interaction with DNA. Acts by binding directly to the C-terminal domain of GyrB, which probably disrupts DNA binding by the gyrase. This Nitrobacter hamburgensis (strain DSM 10229 / NCIMB 13809 / X14) protein is DNA gyrase inhibitor YacG.